Consider the following 435-residue polypeptide: Monodehydroascorbate reductase 4, cytosolic (435 aa).

FAD-binding positions include 14–17 (GGVA), glutamate 41, arginine 48, lysine 53, isoleucine 96, and 147–148 (RD). NAD(+) is bound by residues 172-178 (GGYIGLE), glutamate 196, arginine 202, and glycine 261. 174-178 (YIGLE) lines the NADP(+) pocket. 2 residues coordinate NADP(+): arginine 202 and glycine 261. Residue aspartate 298 participates in FAD binding. 314-315 (EH) serves as a coordination point for NAD(+). 314 to 315 (EH) contacts NADP(+). Valine 316 serves as a coordination point for FAD. L-ascorbate is bound at residue arginine 320. Tyrosine 349 is a binding site for FAD. Tyrosine 349 contributes to the NAD(+) binding site. Residue tyrosine 349 participates in NADP(+) binding. Residue arginine 351 participates in L-ascorbate binding.

It belongs to the FAD-dependent oxidoreductase family. Requires FAD as cofactor. As to expression, expressed in anthers.

It is found in the cytoplasm. It carries out the reaction 2 monodehydro-L-ascorbate radical + NADH + H(+) = 2 L-ascorbate + NAD(+). Its function is as follows. Catalyzes the conversion of monodehydroascorbate to ascorbate, oxidizing NADH in the process. Ascorbate is a major antioxidant against reactive oxygen species (ROS) and nitric oxide (NO). The polypeptide is Monodehydroascorbate reductase 4, cytosolic (Oryza sativa subsp. japonica (Rice)).